Reading from the N-terminus, the 422-residue chain is Adenylosuccinate synthetase (422 aa).

Residues 11 to 17 and 39 to 41 each bind GTP; these read GDEGKGK and GHT. D12 (proton acceptor) is an active-site residue. D12 and G39 together coordinate Mg(2+). Residues 12-15, 37-40, T129, R143, N219, T234, and R298 each bind IMP; these read DEGK and NAGH. The active-site Proton donor is the H40. A substrate-binding site is contributed by 294–300; it reads VTTGRRR. GTP is bound by residues R300, 326-328, and 409-411; these read KLD and GTG.

Belongs to the adenylosuccinate synthetase family. As to quaternary structure, homodimer. Requires Mg(2+) as cofactor.

The protein localises to the cytoplasm. The enzyme catalyses IMP + L-aspartate + GTP = N(6)-(1,2-dicarboxyethyl)-AMP + GDP + phosphate + 2 H(+). Its pathway is purine metabolism; AMP biosynthesis via de novo pathway; AMP from IMP: step 1/2. Its function is as follows. Plays an important role in the de novo pathway and in the salvage pathway of purine nucleotide biosynthesis. Catalyzes the first committed step in the biosynthesis of AMP from IMP. The protein is Adenylosuccinate synthetase of Ajellomyces capsulatus (strain H143) (Darling's disease fungus).